We begin with the raw amino-acid sequence, 100 residues long: Small ribosomal subunit protein uS14c (100 aa).

This sequence belongs to the universal ribosomal protein uS14 family. In terms of assembly, part of the 30S ribosomal subunit.

It localises to the plastid. The protein resides in the chloroplast. In terms of biological role, binds 16S rRNA, required for the assembly of 30S particles. The polypeptide is Small ribosomal subunit protein uS14c (Fagopyrum esculentum subsp. ancestrale (Wild buckwheat)).